A 334-amino-acid chain; its full sequence is Holliday junction branch migration complex subunit RuvB (334 aa).

The segment at 4–184 (ADRLIQPQLQ…FGIPLRLEFY (181 aa)) is large ATPase domain (RuvB-L). Residues Arg24, Gly65, Lys68, Thr69, Thr70, 131–133 (EDY), Arg174, Tyr184, and Arg221 contribute to the ATP site. Thr69 provides a ligand contact to Mg(2+). A small ATPAse domain (RuvB-S) region spans residues 185–255 (NVKDLSTIVT…VAEHALDLLD (71 aa)). The segment at 258–334 (GEGFDYMDRK…YLHFGMIKPE (77 aa)) is head domain (RuvB-H). Arg294, Arg313, and Arg318 together coordinate DNA.

The protein belongs to the RuvB family. Homohexamer. Forms an RuvA(8)-RuvB(12)-Holliday junction (HJ) complex. HJ DNA is sandwiched between 2 RuvA tetramers; dsDNA enters through RuvA and exits via RuvB. An RuvB hexamer assembles on each DNA strand where it exits the tetramer. Each RuvB hexamer is contacted by two RuvA subunits (via domain III) on 2 adjacent RuvB subunits; this complex drives branch migration. In the full resolvosome a probable DNA-RuvA(4)-RuvB(12)-RuvC(2) complex forms which resolves the HJ.

The protein resides in the cytoplasm. It carries out the reaction ATP + H2O = ADP + phosphate + H(+). Its function is as follows. The RuvA-RuvB-RuvC complex processes Holliday junction (HJ) DNA during genetic recombination and DNA repair, while the RuvA-RuvB complex plays an important role in the rescue of blocked DNA replication forks via replication fork reversal (RFR). RuvA specifically binds to HJ cruciform DNA, conferring on it an open structure. The RuvB hexamer acts as an ATP-dependent pump, pulling dsDNA into and through the RuvAB complex. RuvB forms 2 homohexamers on either side of HJ DNA bound by 1 or 2 RuvA tetramers; 4 subunits per hexamer contact DNA at a time. Coordinated motions by a converter formed by DNA-disengaged RuvB subunits stimulates ATP hydrolysis and nucleotide exchange. Immobilization of the converter enables RuvB to convert the ATP-contained energy into a lever motion, pulling 2 nucleotides of DNA out of the RuvA tetramer per ATP hydrolyzed, thus driving DNA branch migration. The RuvB motors rotate together with the DNA substrate, which together with the progressing nucleotide cycle form the mechanistic basis for DNA recombination by continuous HJ branch migration. Branch migration allows RuvC to scan DNA until it finds its consensus sequence, where it cleaves and resolves cruciform DNA. The protein is Holliday junction branch migration complex subunit RuvB of Shewanella sp. (strain MR-4).